The sequence spans 386 residues: Leupaxin (386 aa).

Residue M1 is modified to N-acetylmethionine. An LD motif 1 motif is present at residues 3–15; the sequence is ELDALLEELERCT. A Phosphoserine modification is found at S19. Positions 19–52 are disordered; that stretch reads SEEYSNPVSCHLDQQSTEESKIPQTPKTLSSQGN. A Phosphotyrosine modification is found at Y22. Residues 22-52 show a composition bias toward polar residues; that stretch reads YSNPVSCHLDQQSTEESKIPQTPKTLSSQGN. S54 is subject to Phosphoserine. Y62 carries the phosphotyrosine modification. 2 consecutive short sequence motifs (LD motif) follow at residues 70-82 and 92-103; these read NVYS…KESV and QLDELMAHLSEM. Y72 is subject to Phosphotyrosine; by LYN. The residue at position 81 (S81) is a Phosphoserine. 4 consecutive LIM zinc-binding domains span residues 150–208, 209–267, 268–326, and 327–386; these read GYCA…RLFS, PRCA…AMFS, PKCG…HRRG, and TLCH…LFSQ.

This sequence belongs to the paxillin family. In terms of assembly, interacts with unphosphorylated ITGA4. Interacts with AR and SRF. Interacts with PTK2B/PYK2, PTPN22 and PTPN12. Interacts (via LD motif 3) with LYN and the interaction is induced upon B-cell antigen receptor (BCR) activation. Interacts (via LD motif 3) with PTK2/FAK. Phosphorylated on tyrosine residues. Phosphorylation on Tyr-72 is important for its inhibitory function. Bombesin stimulates phosphorylation on Tyr-22, Tyr-62 and Tyr-72. As to expression, expressed in osteoclasts (at protein level). Highly expressed in vascular smooth muscle.

Its subcellular location is the cytoplasm. The protein resides in the cell junction. The protein localises to the focal adhesion. It localises to the nucleus. It is found in the perinuclear region. Its subcellular location is the cell projection. The protein resides in the podosome. The protein localises to the cell membrane. In terms of biological role, transcriptional coactivator for androgen receptor (AR) and serum response factor (SRF). Contributes to the regulation of cell adhesion, spreading and cell migration and acts as a negative regulator in integrin-mediated cell adhesion events. Suppresses the integrin-induced tyrosine phosphorylation of paxillin (PXN). May play a critical role as an adapter protein in the formation of the adhesion zone in osteoclasts. Negatively regulates B-cell antigen receptor (BCR) signaling. The sequence is that of Leupaxin (Lpxn) from Mus musculus (Mouse).